Here is a 378-residue protein sequence, read N- to C-terminus: Ribosomal RNA large subunit methyltransferase G (378 aa).

This sequence belongs to the methyltransferase superfamily. RlmG family.

Its subcellular location is the cytoplasm. The catalysed reaction is guanosine(1835) in 23S rRNA + S-adenosyl-L-methionine = N(2)-methylguanosine(1835) in 23S rRNA + S-adenosyl-L-homocysteine + H(+). Specifically methylates the guanine in position 1835 (m2G1835) of 23S rRNA. The protein is Ribosomal RNA large subunit methyltransferase G of Escherichia coli O6:K15:H31 (strain 536 / UPEC).